Here is a 499-residue protein sequence, read N- to C-terminus: Probable folate-biopterin transporter 2 (499 aa).

The next 12 membrane-spanning stretches (helical) occupy residues 43–63, 92–112, 116–136, 141–161, 185–205, 209–229, 266–286, 302–322, 330–350, 354–374, 399–419, and 435–455; these read WSFVFGVVSLYGINQGLGGSL, IPWIIKPLWGILTDVLPIFGF, PYFILAGVLGVVSLLFISLHS, YLALFWMTISSAAMAIADVTI, LSSSIGALLGFFMSGILVHLV, GVFGLLTFPFALVSVVGIVFS, LYMYISLTLGLNIHEGLFYWF, FILSIGSIGSILAATLYQLVL, LCLWTQLLFALSGMLDLILVF, LKFGLPDYLFIVVDEIVSQMI, FALLMSIDNAGLMTSSWLGGI, and WLAVLVRNVMRLLPLCFLFLV.

It belongs to the major facilitator superfamily. Folate-biopterin transporter (TC 2.A.71) family.

It is found in the membrane. Functionally, could mediate folate transport. This is Probable folate-biopterin transporter 2 from Arabidopsis thaliana (Mouse-ear cress).